Reading from the N-terminus, the 485-residue chain is NADH-quinone oxidoreductase subunit N (485 aa).

Transmembrane regions (helical) follow at residues 8–28 (LIALLPLLIVGLTVVVVMLSI), 35–55 (FVNATLAVVGLNLALFSLYFV), 75–95 (FYTGLVILASLATCTFAYPWL), 105–125 (FYLLVLIAALGGVVLASASHL), 127–147 (SLFIGIELISLPLFGLVGYAF), 159–179 (YTILSAAASSFLLFGMALVYA), 203–223 (LLAGLGLMIVGFGFKLSLVPF), 235–255 (PAPVSTFLATASKIAIFGVLM), 271–291 (TVLGIIAVASMLFGNLMAISQ), 297–317 (LLGYSSIAHLGYLLVALIAVQ), 326–346 (VGVYLAGYLFSSLGAFGVVSL), 373–393 (AAVMTVMMLSLAGIPMTLGFI), 408–427 (WWLTGAVVLGSAIGLYYYLR), and 449–469 (AFTAGGVVVLISAILVLVLGI).

The protein belongs to the complex I subunit 2 family. NDH-1 is composed of 13 different subunits. Subunits NuoA, H, J, K, L, M, N constitute the membrane sector of the complex.

It is found in the cell inner membrane. The enzyme catalyses a quinone + NADH + 5 H(+)(in) = a quinol + NAD(+) + 4 H(+)(out). NDH-1 shuttles electrons from NADH, via FMN and iron-sulfur (Fe-S) centers, to quinones in the respiratory chain. The immediate electron acceptor for the enzyme in this species is believed to be ubiquinone. Couples the redox reaction to proton translocation (for every two electrons transferred, four hydrogen ions are translocated across the cytoplasmic membrane), and thus conserves the redox energy in a proton gradient. The chain is NADH-quinone oxidoreductase subunit N from Erwinia tasmaniensis (strain DSM 17950 / CFBP 7177 / CIP 109463 / NCPPB 4357 / Et1/99).